Consider the following 192-residue polypeptide: Ion-translocating oxidoreductase complex subunit A (192 aa).

A run of 6 helical transmembrane segments spans residues 5-25 (LLLL…FLGL), 39-59 (IGMS…SYLV), 65-85 (LPFD…AVVV), 102-122 (ALGI…VALL), 134-154 (AIYG…FSAM), and 171-191 (AIAM…TGLV).

This sequence belongs to the NqrDE/RnfAE family. The complex is composed of six subunits: RnfA, RnfB, RnfC, RnfD, RnfE and RnfG.

Its subcellular location is the cell inner membrane. Part of a membrane-bound complex that couples electron transfer with translocation of ions across the membrane. The chain is Ion-translocating oxidoreductase complex subunit A from Shewanella baltica (strain OS185).